Reading from the N-terminus, the 392-residue chain is Tryptophan synthase beta chain (392 aa).

An N6-(pyridoxal phosphate)lysine modification is found at Lys-84.

This sequence belongs to the TrpB family. Tetramer of two alpha and two beta chains. Pyridoxal 5'-phosphate serves as cofactor.

The catalysed reaction is (1S,2R)-1-C-(indol-3-yl)glycerol 3-phosphate + L-serine = D-glyceraldehyde 3-phosphate + L-tryptophan + H2O. Its pathway is amino-acid biosynthesis; L-tryptophan biosynthesis; L-tryptophan from chorismate: step 5/5. Functionally, the beta subunit is responsible for the synthesis of L-tryptophan from indole and L-serine. The sequence is that of Tryptophan synthase beta chain from Campylobacter jejuni subsp. doylei (strain ATCC BAA-1458 / RM4099 / 269.97).